The sequence spans 402 residues: MKLMTMPSEFQKALPILTKIKEAGYEAYFVGGSVRDVLLERPIHDVDIATSSYPEETKAIFNRTVDVGIEHGTVLVLENGGEYEITTFRTEDVYVDYRRPSQVSFVRSLEEDLKRRDFTVNALALDENGQVIDKFRGLIDLEQKRLRAVGKAEERFEEDALRIMRGFRFAASLDFDIEAATFEAMRSHSPLLEKISVERSFTEFDKLLMAPHWRKGISAMIACQAYDYLPGLKQREAGLNHLIVSLKDNFTFSDHHQAWAYVMISLAIEDPKSFLKAWKTSNDFQRYVTKLIALYRIRQERSFEKLDIYQYGKEMASLVEGLRKAQSLSVDMDHIEALDQALAIHNKHDIVLNGSHLIKDFGMEPGPQLGLMLEKVELAIVEGCLDNDFTTIEAFVREELAT.

Positions 32 and 35 each coordinate ATP. CTP is bound by residues Gly32 and Arg35. Residues Asp45 and Asp47 each contribute to the Mg(2+) site. ATP contacts are provided by Arg116, Asp159, Arg162, Arg165, and Arg168. Positions 116, 159, 162, 165, and 168 each coordinate CTP.

The protein belongs to the tRNA nucleotidyltransferase/poly(A) polymerase family. Bacterial CCA-adding enzyme type 3 subfamily. As to quaternary structure, homodimer. Requires Mg(2+) as cofactor.

The catalysed reaction is a tRNA precursor + 2 CTP + ATP = a tRNA with a 3' CCA end + 3 diphosphate. It catalyses the reaction a tRNA with a 3' CCA end + 2 CTP + ATP = a tRNA with a 3' CCACCA end + 3 diphosphate. Catalyzes the addition and repair of the essential 3'-terminal CCA sequence in tRNAs without using a nucleic acid template. Adds these three nucleotides in the order of C, C, and A to the tRNA nucleotide-73, using CTP and ATP as substrates and producing inorganic pyrophosphate. tRNA 3'-terminal CCA addition is required both for tRNA processing and repair. Also involved in tRNA surveillance by mediating tandem CCA addition to generate a CCACCA at the 3' terminus of unstable tRNAs. While stable tRNAs receive only 3'-terminal CCA, unstable tRNAs are marked with CCACCA and rapidly degraded. The chain is CCA-adding enzyme from Streptococcus pyogenes serotype M4 (strain MGAS10750).